The primary structure comprises 335 residues: MLALGKLLELTLAGREPAEKTQLTVEGVRMRWLAEGALEVRPPQARDNGTDLLLSAGIHGNETAPIELLDELIRSIARGDLKPRARILFLFGNPAAMRLGARYVEQDVNRLFNGRHEQSGGAEALRACELERLAASFFSLPDRYRLHYDLHTAIRGSKIEQFALYPWKEGRQHSRFELARLRAAGISAVLLQNKPSIVFSAYTYEQLGAEAFTLELGKARPFGQNRHVNLAPLRLRLEQIIEGSEPQPDERLEGLQLFSVAREVIKRSDAFTFNLADDVENFSELEKGYVLAEDVSDSRWVVKEEGARIIFPNPKVKNGLRAGIVIVPADADGLG.

Residues H59, E62, and H151 each coordinate Zn(2+). Residue E215 is part of the active site.

Belongs to the AspA/AstE family. Succinylglutamate desuccinylase subfamily. Zn(2+) is required as a cofactor.

It catalyses the reaction N-succinyl-L-glutamate + H2O = L-glutamate + succinate. It functions in the pathway amino-acid degradation; L-arginine degradation via AST pathway; L-glutamate and succinate from L-arginine: step 5/5. Transforms N(2)-succinylglutamate into succinate and glutamate. The chain is Succinylglutamate desuccinylase from Pseudomonas syringae pv. tomato (strain ATCC BAA-871 / DC3000).